Here is a 202-residue protein sequence, read N- to C-terminus: MSRYRGPRVRIIRRLGTLPGLTSKTPESKPSYINQSTSSRKISQYRIRLEEKQKLRFHYGITERQLLKYVRIARKAKGSTGQVLLQLLEMRLDNIIFRLGLAPTIPGARQLVNHRHVLVNDCTVDIPSFRCKPQDVITIRDRQKSQNLMKRSRDSYEKYGIPNHLTFNSVQNIGLVNETIDRDWIGLKINELLVVEYYSRQA.

The S4 RNA-binding domain maps to 90-158; it reads MRLDNIIFRL…MKRSRDSYEK (69 aa).

Belongs to the universal ribosomal protein uS4 family. As to quaternary structure, part of the 30S ribosomal subunit. Contacts protein S5. The interaction surface between S4 and S5 is involved in control of translational fidelity.

The protein localises to the plastid. The protein resides in the chloroplast. Functionally, one of the primary rRNA binding proteins, it binds directly to 16S rRNA where it nucleates assembly of the body of the 30S subunit. Its function is as follows. With S5 and S12 plays an important role in translational accuracy. The protein is Small ribosomal subunit protein uS4c (rps4) of Anthoceros angustus (Hornwort).